Reading from the N-terminus, the 173-residue chain is Peptide deformylase (173 aa).

The Fe cation site is built by Cys-94 and His-136. Glu-137 is an active-site residue. A Fe cation-binding site is contributed by His-140.

Belongs to the polypeptide deformylase family. The cofactor is Fe(2+).

The catalysed reaction is N-terminal N-formyl-L-methionyl-[peptide] + H2O = N-terminal L-methionyl-[peptide] + formate. Removes the formyl group from the N-terminal Met of newly synthesized proteins. Requires at least a dipeptide for an efficient rate of reaction. N-terminal L-methionine is a prerequisite for activity but the enzyme has broad specificity at other positions. The polypeptide is Peptide deformylase (Desulfosudis oleivorans (strain DSM 6200 / JCM 39069 / Hxd3) (Desulfococcus oleovorans)).